Reading from the N-terminus, the 395-residue chain is uncharacterized protein (395 aa).

Disordered stretches follow at residues 185–282 (RREV…SSTA) and 316–372 (GSST…TCSS). A compositionally biased stretch (basic residues) spans 248-257 (LHLRTRHPHR). Low complexity predominate over residues 342–360 (ARASTHSRSSPSASANSRY).

This is an uncharacterized protein from Streptomyces fradiae (Streptomyces roseoflavus).